A 346-amino-acid polypeptide reads, in one-letter code: Ribosomal RNA small subunit methyltransferase H (346 aa).

Residues 53–55 (GGY), aspartate 70, phenylalanine 97, aspartate 114, and glutamine 121 each bind S-adenosyl-L-methionine.

Belongs to the methyltransferase superfamily. RsmH family.

It is found in the cytoplasm. The enzyme catalyses cytidine(1402) in 16S rRNA + S-adenosyl-L-methionine = N(4)-methylcytidine(1402) in 16S rRNA + S-adenosyl-L-homocysteine + H(+). In terms of biological role, specifically methylates the N4 position of cytidine in position 1402 (C1402) of 16S rRNA. The chain is Ribosomal RNA small subunit methyltransferase H from Bartonella henselae (strain ATCC 49882 / DSM 28221 / CCUG 30454 / Houston 1) (Rochalimaea henselae).